The chain runs to 477 residues: Argininosuccinate synthase (477 aa).

ATP-binding positions include 17–25 (AFSGGLDTS) and Ala43. Tyr99 is a binding site for L-citrulline. Residues Gly129 and Thr131 each coordinate ATP. Positions 131, 135, and 136 each coordinate L-aspartate. L-citrulline is bound at residue Asn135. Asp136 is a binding site for ATP. 2 residues coordinate L-citrulline: Arg139 and Ser192. Residue Asp194 coordinates ATP. L-citrulline is bound by residues Thr201, Glu203, and Glu280. A disordered region spans residues 450 to 477 (DQITENPEVQAEPEEEALDAAAMEAGTD). The segment covering 468–477 (DAAAMEAGTD) has biased composition (low complexity).

Belongs to the argininosuccinate synthase family. Type 2 subfamily. Homotetramer.

Its subcellular location is the cytoplasm. The enzyme catalyses L-citrulline + L-aspartate + ATP = 2-(N(omega)-L-arginino)succinate + AMP + diphosphate + H(+). It functions in the pathway amino-acid biosynthesis; L-arginine biosynthesis; L-arginine from L-ornithine and carbamoyl phosphate: step 2/3. The chain is Argininosuccinate synthase from Nocardioides sp. (strain ATCC BAA-499 / JS614).